The following is a 360-amino-acid chain: MDIKQLLLSIILTVSVVNGRGRRINIYGAENGKSDIVQLRGPAEQLVYSSPIRERRPIFRNALLSNSPLRWSKMQDLDGNYLIPYVISGNYDTVERDTIKTAMEKIANNTCIRLIPRTNQPDYAEINNKKGQGCYASIGRFPGKNVVMLESNDDQSCIQEDTVIHELFHVIGLWHEHMRADRDAFINVLYKNIEPAQYPQFEKLSSRDATTYSVPYDYNSVMHYDENAFAKPGKISMMTKDSKFQKVIGHPKDASSNDYKKVCAIYHCSKCMHQDFQQIVEQEHIELNNPIITNAPVQQGDSCTDRLGICPMLKSREMLNCKVMATFCCSSCSAPTSTTTTTSGTPSDGSLWQRIKSIFQ.

Positions 1–21 are cleaved as a signal peptide; that stretch reads MDIKQLLLSIILTVSVVNGRG. Residues 61–269 form the Peptidase M12A domain; the sequence is NALLSNSPLR…KKVCAIYHCS (209 aa). Residue N108 is glycosylated (N-linked (GlcNAc...) asparagine). Disulfide bonds link C111–C268 and C134–C157. H165 serves as a coordination point for Zn(2+). Residue E166 is part of the active site. Zn(2+) contacts are provided by H169 and H175. A PLAC domain is found at 299–336; sequence QGDSCTDRLGICPMLKSREMLNCKVMATFCCSSCSAPT.

Zn(2+) serves as cofactor.

The protein resides in the secreted. In terms of biological role, metalloprotease. This is Zinc metalloproteinase nas-5 (nas-5) from Caenorhabditis elegans.